Consider the following 178-residue polypeptide: Caveolin-1 (178 aa).

Serine 2 is subject to N-acetylserine. The residue at position 2 (serine 2) is a Phosphoserine. The segment at 2 to 94 (SGGKYVDSEG…WKASFTTFTV (93 aa)) is required for homooligomerization. The Cytoplasmic portion of the chain corresponds to 2–104 (SGGKYVDSEG…TKYWFYRLLS (103 aa)). At lysine 5 the chain carries N6-acetyllysine; alternate. Residue lysine 5 forms a Glycyl lysine isopeptide (Lys-Gly) (interchain with G-Cter in ubiquitin); alternate linkage. At tyrosine 6 the chain carries Phosphotyrosine. At serine 9 the chain carries Phosphoserine. The residue at position 14 (tyrosine 14) is a Phosphotyrosine; by ABL1. Tyrosine 25 carries the phosphotyrosine modification. Glycyl lysine isopeptide (Lys-Gly) (interchain with G-Cter in ubiquitin) cross-links involve residues lysine 26 and lysine 30. Serine 37 bears the Phosphoserine mark. Glycyl lysine isopeptide (Lys-Gly) (interchain with G-Cter in ubiquitin) cross-links involve residues lysine 39, lysine 47, and lysine 57. Residues 82-94 (DGIWKASFTTFTV) are interaction with CAVIN3. Positions 105 to 125 (ALFGIPMALIWGIYFAILSFL) form an intramembrane region, helical. The Cytoplasmic portion of the chain corresponds to 126–178 (HIWAVVPCIKSFLIEIQCISRVYSIYIHTVCDPLFEAIGKIFSNVRISLQKEI). The interacts with SPRY1, SPRY2, SPRY3 and SPRY4 stretch occupies residues 131–142 (VPCIKSFLIEIQ). S-palmitoyl cysteine attachment occurs at residues cysteine 133, cysteine 143, and cysteine 156. The interacts with SPRY1, SPRY2, and SPRY4 stretch occupies residues 149 to 160 (SIYIHTVCDPLF). Positions 167–178 (FSNVRISLQKEI) are interacts with SPRY1, SPRY2, SPRY3 and SPRY4.

It belongs to the caveolin family. In terms of assembly, homooligomer. Interacts with GLIPR2. Interacts with NOSTRIN. Interacts with SNAP25 and STX1A. Interacts (via the N-terminus) with DPP4; the interaction is direct. Interacts with CTNNB1, CDH1 and JUP. Interacts with PACSIN2; this interaction induces membrane tubulation. Interacts with SLC7A9. Interacts with BMX and BTK. Interacts with TGFBR1. Interacts with CAVIN3 (via leucine-zipper domain) in a cholesterol-sensitive manner. Interacts with CAVIN1. Interacts with EHD2 in a cholesterol-dependent manner. Forms a ternary complex with UBXN6 and VCP; mediates CAV1 targeting to lysosomes for degradation. Interacts with ABCG1; this interaction regulates ABCG1-mediated cholesterol efflux. Interacts with NEU3; this interaction enhances NEU3 sialidase activity within caveola. Interacts (via C-terminus) with SPRY1, SPRY2 (via C-terminus), SPRY3, and SPRY4. Interacts with IGFBP5; this interaction allows trafficking of IGFBP5 from the plasma membrane to the nucleus. Phosphorylated at Tyr-14 by ABL1 in response to oxidative stress. In terms of processing, ubiquitinated. Undergo monoubiquitination and multi- and/or polyubiquitination. Monoubiquitination of N-terminal lysines promotes integration in a ternary complex with UBXN6 and VCP which promotes oligomeric CAV1 targeting to lysosomes for degradation. Ubiquitinated by ZNRF1; leading to degradation and modulation of the TLR4-mediated immune response.

It is found in the golgi apparatus membrane. The protein resides in the cell membrane. The protein localises to the membrane. Its subcellular location is the caveola. It localises to the membrane raft. In terms of biological role, may act as a scaffolding protein within caveolar membranes. Forms a stable heterooligomeric complex with CAV2 that targets to lipid rafts and drives caveolae formation. Mediates the recruitment of CAVIN proteins (CAVIN1/2/3/4) to the caveolae. Interacts directly with G-protein alpha subunits and can functionally regulate their activity. Involved in the costimulatory signal essential for T-cell receptor (TCR)-mediated T-cell activation. Its binding to DPP4 induces T-cell proliferation and NF-kappa-B activation in a T-cell receptor/CD3-dependent manner. Recruits CTNNB1 to caveolar membranes and may regulate CTNNB1-mediated signaling through the Wnt pathway. Negatively regulates TGFB1-mediated activation of SMAD2/3 by mediating the internalization of TGFBR1 from membrane rafts leading to its subsequent degradation. Binds 20(S)-hydroxycholesterol (20(S)-OHC). In Aotus nancymaae (Ma's night monkey), this protein is Caveolin-1 (CAV1).